We begin with the raw amino-acid sequence, 336 residues long: E3 ubiquitin-protein ligase RING2 (336 aa).

The interval 2–179 is interaction with HIP2; the sequence is TQTVQTNGVQ…AEDNGDSSHC (178 aa). The segment at 51–91 adopts an RING-type zinc-finger fold; the sequence is CPICLDMLKNTMTTKECLHRFCADCIITALRSGNKECPTCR. Positions 93 to 98 are interaction with nucleosomes via an acidic patch on histone H2A and histone H2B; sequence KLVSKR. A disordered region spans residues 158-218; sequence RGKKHQIENG…NATENGGGDI (61 aa). Positions 176–190 are enriched in polar residues; it reads SSHCSNASVHSNQEA.

In terms of assembly, component of chromatin-associated Polycomb (PcG) complexes. Component of a PRC1-like complex. Component of some MLL1/MLL complex.

The protein localises to the nucleus. It localises to the cytoplasm. The protein resides in the chromosome. The enzyme catalyses S-ubiquitinyl-[E2 ubiquitin-conjugating enzyme]-L-cysteine + [acceptor protein]-L-lysine = [E2 ubiquitin-conjugating enzyme]-L-cysteine + N(6)-ubiquitinyl-[acceptor protein]-L-lysine.. It participates in protein modification; protein ubiquitination. In terms of biological role, E3 ubiquitin-protein ligase that mediates monoubiquitination of 'Lys-119' of histone H2A (H2AK119Ub), thereby playing a central role in histone code and gene regulation. H2AK119Ub gives a specific tag for epigenetic transcriptional repression. Essential component of a Polycomb group (PcG) multiprotein PRC1-like complex, a complex class required to maintain the transcriptionally repressive state of many genes, including Hox genes, throughout development. PcG PRC1 complex acts via chromatin remodeling and modification of histones, rendering chromatin heritably changed in its expressibility. This is E3 ubiquitin-protein ligase RING2 (rnf2) from Danio rerio (Zebrafish).